The sequence spans 79 residues: Acyl carrier protein (79 aa).

One can recognise a Carrier domain in the interval 2 to 77 (SEIGERVKKI…DATKFLEKNA (76 aa)). Serine 37 carries the O-(pantetheine 4'-phosphoryl)serine modification.

It belongs to the acyl carrier protein (ACP) family. In terms of processing, 4'-phosphopantetheine is transferred from CoA to a specific serine of apo-ACP by AcpS. This modification is essential for activity because fatty acids are bound in thioester linkage to the sulfhydryl of the prosthetic group.

It is found in the cytoplasm. The protein operates within lipid metabolism; fatty acid biosynthesis. In terms of biological role, carrier of the growing fatty acid chain in fatty acid biosynthesis. The sequence is that of Acyl carrier protein from Nitrobacter hamburgensis (strain DSM 10229 / NCIMB 13809 / X14).